A 242-amino-acid polypeptide reads, in one-letter code: Beta-carotene ketolase (242 aa).

The enzyme catalyses all-trans-beta-carotene + 2 AH2 + 2 O2 = echinenone + 2 A + 3 H2O. The catalysed reaction is echinenone + 2 AH2 + 2 O2 = canthaxanthin + 2 A + 3 H2O. Its pathway is carotenoid biosynthesis; astaxanthin biosynthesis. Its function is as follows. Converts beta-carotene to canthaxanthin via echinenone. The chain is Beta-carotene ketolase from Paracoccus sp. (strain PC1) (Alcaligenes sp. (strain PC1)).